A 138-amino-acid chain; its full sequence is Biopolymer transport protein exbD1 (138 aa).

Topologically, residues 1 to 16 are cytoplasmic; sequence MIKSSAKHNDFGLTPD. Residues 17–37 form a helical membrane-spanning segment; that stretch reads LTPLLDIIFIVMVFLLLTASV. Over 38–138 the chain is Periplasmic; that stretch reads RLESLEVALP…TQLLTEPSHS (101 aa).

The protein belongs to the ExbD/TolR family. The accessory proteins ExbB and ExbD seem to form a complex with TonB.

The protein resides in the cell inner membrane. Its function is as follows. Involved in the TonB-dependent energy-dependent transport of various receptor-bound substrates. This Vibrio cholerae serotype O1 (strain ATCC 39315 / El Tor Inaba N16961) protein is Biopolymer transport protein exbD1 (exbD1).